The following is a 332-amino-acid chain: Anthranilate phosphoribosyltransferase (332 aa).

Residues glycine 79, 82–83, threonine 87, 89–92, 107–115, and serine 119 each bind 5-phospho-alpha-D-ribose 1-diphosphate; these read GD, NIST, and KHGNRSVSS. Position 79 (glycine 79) interacts with anthranilate. Serine 91 is a binding site for Mg(2+). Asparagine 110 is a binding site for anthranilate. Arginine 165 is a binding site for anthranilate. Residues aspartate 223 and glutamate 224 each coordinate Mg(2+).

It belongs to the anthranilate phosphoribosyltransferase family. Homodimer. Mg(2+) serves as cofactor.

It catalyses the reaction N-(5-phospho-beta-D-ribosyl)anthranilate + diphosphate = 5-phospho-alpha-D-ribose 1-diphosphate + anthranilate. The protein operates within amino-acid biosynthesis; L-tryptophan biosynthesis; L-tryptophan from chorismate: step 2/5. Catalyzes the transfer of the phosphoribosyl group of 5-phosphorylribose-1-pyrophosphate (PRPP) to anthranilate to yield N-(5'-phosphoribosyl)-anthranilate (PRA). The polypeptide is Anthranilate phosphoribosyltransferase (Vibrio parahaemolyticus serotype O3:K6 (strain RIMD 2210633)).